Here is a 190-residue protein sequence, read N- to C-terminus: Protein GrpE (190 aa).

Residues 1–11 (MSNQDEPQNSP) show a composition bias toward polar residues. The interval 1-36 (MSNQDEPQNSPEEFAEDQQADVALEEASSDSSETAA) is disordered. Residues 13-28 (EFAEDQQADVALEEAS) show a composition bias toward acidic residues.

It belongs to the GrpE family. As to quaternary structure, homodimer.

It localises to the cytoplasm. Its function is as follows. Participates actively in the response to hyperosmotic and heat shock by preventing the aggregation of stress-denatured proteins, in association with DnaK and GrpE. It is the nucleotide exchange factor for DnaK and may function as a thermosensor. Unfolded proteins bind initially to DnaJ; upon interaction with the DnaJ-bound protein, DnaK hydrolyzes its bound ATP, resulting in the formation of a stable complex. GrpE releases ADP from DnaK; ATP binding to DnaK triggers the release of the substrate protein, thus completing the reaction cycle. Several rounds of ATP-dependent interactions between DnaJ, DnaK and GrpE are required for fully efficient folding. This is Protein GrpE from Teredinibacter turnerae (strain ATCC 39867 / T7901).